A 179-amino-acid polypeptide reads, in one-letter code: Phospholipase A2 (179 aa).

Residues 1–21 form the signal peptide; sequence MHALRSSVLALWLCLHVSVRA. Residues 22 to 39 constitute a propeptide that is removed on maturation; it reads WMTYRSANGLDEYEPEDR. 3 residues coordinate Ca(2+): tryptophan 47, glycine 49, and glycine 51. 5 cysteine pairs are disulfide-bonded: cysteine 48–cysteine 70, cysteine 69–cysteine 109, cysteine 76–cysteine 102, cysteine 100–cysteine 133, and cysteine 142–cysteine 150. Histidine 73 is an active-site residue. Aspartate 74 is a Ca(2+) binding site. Residue aspartate 103 is part of the active site. Residue asparagine 112 is glycosylated (N-linked (GlcNAc...) asparagine).

Ca(2+) is required as a cofactor. As to expression, expressed by the venom gland.

It localises to the secreted. The catalysed reaction is a 1,2-diacyl-sn-glycero-3-phosphocholine + H2O = a 1-acyl-sn-glycero-3-phosphocholine + a fatty acid + H(+). Its function is as follows. PLA2 catalyzes the calcium-dependent hydrolysis of the 2-acyl groups in 3-sn-phosphoglycerides. In Xylocopa appendiculata circumvolans (Japanese carpenter bee), this protein is Phospholipase A2.